Here is a 430-residue protein sequence, read N- to C-terminus: Adenylosuccinate synthetase (430 aa).

Residues G12 to K18 and G40 to T42 contribute to the GTP site. The active-site Proton acceptor is the D13. Mg(2+) contacts are provided by D13 and G40. Residues D13 to K16, N38 to H41, T130, R144, Q225, T240, and R304 contribute to the IMP site. H41 serves as the catalytic Proton donor. A300–R306 serves as a coordination point for substrate. Residues R306, K332–D334, and S414–G416 each bind GTP.

Belongs to the adenylosuccinate synthetase family. Homodimer. Requires Mg(2+) as cofactor.

It localises to the cytoplasm. The enzyme catalyses IMP + L-aspartate + GTP = N(6)-(1,2-dicarboxyethyl)-AMP + GDP + phosphate + 2 H(+). The protein operates within purine metabolism; AMP biosynthesis via de novo pathway; AMP from IMP: step 1/2. Plays an important role in the de novo pathway of purine nucleotide biosynthesis. Catalyzes the first committed step in the biosynthesis of AMP from IMP. This is Adenylosuccinate synthetase from Geobacter metallireducens (strain ATCC 53774 / DSM 7210 / GS-15).